The chain runs to 781 residues: Tax1-binding protein 1 homolog A (781 aa).

2 coiled-coil regions span residues 148 to 453 (NSDI…QGDA) and 488 to 581 (DVEK…YMRE). Residues 441–465 (KLTQQQETQQGDANRNDASTETTLE) are compositionally biased toward polar residues. Disordered stretches follow at residues 441–510 (KLTQ…EEEC) and 630–691 (ETRD…EAPA). Residues 484–495 (TVARDVEKSRDE) show a composition bias toward basic and acidic residues. Acidic residues predominate over residues 496–510 (EGNEQEEEDEEEEEC). The segment covering 646–656 (RPPPLAPPPWG) has biased composition (pro residues). 2 consecutive UBZ1-type zinc fingers follow at residues 716–742 (HKQC…VESH) and 743–769 (WRVC…VHTH). Zn(2+) contacts are provided by C719, C722, H738, H742, C746, C749, H765, and H769.

Little expression is observed during pectoral fin development, except for an elevated level of expression in the distal mesenchyme cells of some samples.

Functionally, may have anti-apoptotic activity. The protein is Tax1-binding protein 1 homolog A of Danio rerio (Zebrafish).